Here is a 193-residue protein sequence, read N- to C-terminus: Sarcoplasmic calcium-binding protein (193 aa).

3 consecutive EF-hand domains span residues methionine 16–isoleucine 40, isoleucine 57–glycine 92, and cysteine 101–phenylalanine 136. Residues aspartate 18, aspartate 20, asparagine 22, tyrosine 24, aspartate 29, aspartate 70, asparagine 72, aspartate 74, glutamine 76, glutamate 81, aspartate 114, asparagine 116, aspartate 118, and glutamate 125 each coordinate Ca(2+).

Monomer and dimer. In terms of tissue distribution, skeletal muscle (at protein level).

Functionally, like parvalbumins, SCPs seem to be more abundant in fast contracting muscles, but no functional relationship can be established from this distribution. This is Sarcoplasmic calcium-binding protein from Scylla paramamosain (Mud crab).